The primary structure comprises 100 residues: Large ribosomal subunit protein uL23 (100 aa).

Belongs to the universal ribosomal protein uL23 family. In terms of assembly, part of the 50S ribosomal subunit. Contacts protein L29, and trigger factor when it is bound to the ribosome.

In terms of biological role, one of the early assembly proteins it binds 23S rRNA. One of the proteins that surrounds the polypeptide exit tunnel on the outside of the ribosome. Forms the main docking site for trigger factor binding to the ribosome. The sequence is that of Large ribosomal subunit protein uL23 from Prochlorococcus marinus subsp. pastoris (strain CCMP1986 / NIES-2087 / MED4).